Reading from the N-terminus, the 466-residue chain is Argininosuccinate lyase (466 aa).

Belongs to the lyase 1 family. Argininosuccinate lyase subfamily.

Its subcellular location is the cytoplasm. The enzyme catalyses 2-(N(omega)-L-arginino)succinate = fumarate + L-arginine. The protein operates within amino-acid biosynthesis; L-arginine biosynthesis; L-arginine from L-ornithine and carbamoyl phosphate: step 3/3. The polypeptide is Argininosuccinate lyase (Bartonella bacilliformis (strain ATCC 35685 / KC583 / Herrer 020/F12,63)).